The primary structure comprises 339 residues: MIKQVCKNITICSLALSTALTVFPASSYAEIKSKITTVSEKNLDGDTKMYTRTATTSDTEKKISQSLQFNFLTEPNYDKETVFIKAKGTIGSGLKILNPNGYWNSTLRWPGSYSVSIQNVDDNNNSTNVTDFAPKNQDESREVKYTYGYKTGGDFSINRGGLTGNITKEKNYSETISYQQPSYRTLIDQPTTNKGVAWKVEAHSINNMGHDHTRQLTNDSDDRVKSEIFSLTRNGNLWAKDNFTPKNKMPVTVSEGFNPEFLAVMSHDKNDKGKSRFIVHYKRSMDDFKLDWNKHGFWGYWSGENHVDQKEEKLSALYEVDWKTHDVKLIKTINDKEQK.

The first 29 residues, 1–29, serve as a signal peptide directing secretion; it reads MIKQVCKNITICSLALSTALTVFPASSYA.

This sequence belongs to the aerolysin family.

This is an uncharacterized protein from Staphylococcus aureus (strain MRSA252).